Consider the following 144-residue polypeptide: uncharacterized protein (144 aa).

This is an uncharacterized protein from Vibrio parahaemolyticus serotype O3:K6 (strain RIMD 2210633).